The primary structure comprises 316 residues: MPVSKSVSPPKRTLLLAPPTLASHSSALSSVLADYDRSVTDLQMLDRLSAGLVKLPSSTYDRVLILADASFMLGESLALMNRAVLGPVAEALKPNGRLQSQDGNSLEESTLSKEAVLAGLVASRGGFEKPDYGDNEGAVTLKFGLKKKNQPAPLADGSVPLNFKKKKPVEVKPVVPVVPAGVGFIDLSDDLDDDDLIDEDTLMTEEDLLRPINIPVECQPKAGKRRRACKDCSCGLAERLVKEDAEKRAEADKKLESVKLATDDLAEIDFTVQGKVGSCGNCSLGDAFRCDGCPYIGLPPFKPGEEVRLLNNDVQL.

Residues 7-139 (VSPPKRTLLL…PDYGDNEGAV (133 aa)) are N-terminal SAM-like domain. The tract at residues 140-208 (TLKFGLKKKN…EDTLMTEEDL (69 aa)) is linker. Positions 218, 229, 232, and 234 each coordinate [2Fe-2S] cluster. The interval 218–234 (CQPKAGKRRRACKDCSC) is fe-S binding site A. The [4Fe-4S] cluster site is built by Cys-279, Cys-282, Cys-290, and Cys-293. 2 consecutive short sequence motifs (cx2C motif) follow at residues 279 to 282 (CGNC) and 290 to 293 (CDGC). A fe-S binding site B region spans residues 279-293 (CGNCSLGDAFRCDGC).

Belongs to the anamorsin family. Monomer. Interacts with TAH18. Interacts with MIA40. Requires [2Fe-2S] cluster as cofactor. [4Fe-4S] cluster is required as a cofactor.

It is found in the cytoplasm. The protein localises to the mitochondrion intermembrane space. In terms of biological role, component of the cytosolic iron-sulfur (Fe-S) protein assembly (CIA) machinery required for the maturation of extramitochondrial Fe-S proteins. Part of an electron transfer chain functioning in an early step of cytosolic Fe-S biogenesis, facilitating the de novo assembly of a [4Fe-4S] cluster on the scaffold complex CFD1-NBP35. Electrons are transferred to DRE2 from NADPH via the FAD- and FMN-containing protein TAH18. TAH18-DRE2 are also required for the assembly of the diferric tyrosyl radical cofactor of ribonucleotide reductase (RNR), probably by providing electrons for reduction during radical cofactor maturation in the catalytic small subunit RNR2. The protein is Fe-S cluster assembly protein DRE2 of Fusarium vanettenii (strain ATCC MYA-4622 / CBS 123669 / FGSC 9596 / NRRL 45880 / 77-13-4) (Fusarium solani subsp. pisi).